Here is a 672-residue protein sequence, read N- to C-terminus: uncharacterized protein (672 aa).

Basic and acidic residues predominate over residues 1-10 (MAKSDGDDPL). Positions 1-40 (MAKSDGDDPLRPASPRLRSSRRHSLRYSAYTGGPDPLAPP) are disordered.

This is an uncharacterized protein from Mycobacterium tuberculosis (strain CDC 1551 / Oshkosh).